We begin with the raw amino-acid sequence, 351 residues long: Biotin synthase (351 aa).

The Radical SAM core domain occupies asparagine 44–glutamine 262. Residues cysteine 59, cysteine 63, and cysteine 66 each coordinate [4Fe-4S] cluster. Positions 103, 134, 194, and 266 each coordinate [2Fe-2S] cluster.

The protein belongs to the radical SAM superfamily. Biotin synthase family. Homodimer. Requires [4Fe-4S] cluster as cofactor. [2Fe-2S] cluster is required as a cofactor.

The catalysed reaction is (4R,5S)-dethiobiotin + (sulfur carrier)-SH + 2 reduced [2Fe-2S]-[ferredoxin] + 2 S-adenosyl-L-methionine = (sulfur carrier)-H + biotin + 2 5'-deoxyadenosine + 2 L-methionine + 2 oxidized [2Fe-2S]-[ferredoxin]. The protein operates within cofactor biosynthesis; biotin biosynthesis; biotin from 7,8-diaminononanoate: step 2/2. Catalyzes the conversion of dethiobiotin (DTB) to biotin by the insertion of a sulfur atom into dethiobiotin via a radical-based mechanism. The protein is Biotin synthase of Pseudomonas fluorescens (strain ATCC BAA-477 / NRRL B-23932 / Pf-5).